A 457-amino-acid chain; its full sequence is Carboxypeptidase N catalytic chain (457 aa).

The N-terminal stretch at 1-23 (MPDLPSAFLPLLLLSKFVTPVTF) is a signal peptide. One can recognise a Peptidase M14 domain in the interval 24-338 (RHHRYDDLVR…EALIQFLEQV (315 aa)). Cys-42 and Cys-104 are oxidised to a cystine. Residues His-86, Glu-89, and His-216 each contribute to the Zn(2+) site. A disulfide bond links Cys-271 and Cys-311. Glu-308 (proton donor/acceptor) is an active-site residue. O-linked (GalNAc...) threonine glycosylation is found at Thr-400, Thr-402, and Thr-409. The segment at 418 to 457 (SSSQVYPVQRAPGRGQGGRAKQPRTSRKKDPATKRHRGPA) is disordered.

Belongs to the peptidase M14 family. In terms of assembly, tetramer of two catalytic chains and two glycosylated inactive chains. Zn(2+) serves as cofactor. Mainly expressed in liver. Also detected in lung, stomach, intestine, spleen and kidney.

The protein resides in the secreted. It is found in the extracellular space. It catalyses the reaction Release of a C-terminal basic amino acid, preferentially lysine.. Protects the body from potent vasoactive and inflammatory peptides containing C-terminal Arg or Lys (such as kinins or anaphylatoxins) which are released into the circulation. The sequence is that of Carboxypeptidase N catalytic chain (Cpn1) from Mus musculus (Mouse).